Here is a 322-residue protein sequence, read N- to C-terminus: Mitochondrial thiamine pyrophosphate carrier 1 (322 aa).

Solcar repeat units lie at residues G12–A111, P122–P208, and P215–L310. A run of 6 helical transmembrane segments spans residues M18–V38, L92–V108, F128–L148, F180–A200, A221–I241, and G285–W302.

Belongs to the mitochondrial carrier (TC 2.A.29) family.

It localises to the mitochondrion inner membrane. Mitochondrial transporter that mediates uptake of thiamine pyrophosphate (ThPP) into mitochondria. This Sclerotinia sclerotiorum (strain ATCC 18683 / 1980 / Ss-1) (White mold) protein is Mitochondrial thiamine pyrophosphate carrier 1 (tpc1).